Reading from the N-terminus, the 257-residue chain is Zinc-finger homeodomain protein 6 (257 aa).

The tract at residues 1–35 (MEFRGHDEPVDEMGVAYGRTPPSSSSSPAASASAG) is disordered. Residues 21–35 (PPSSSSSPAASASAG) are compositionally biased toward low complexity. Residues 45-93 (YHECLRNHAAAMGGHVVDGCGEFMPMPGDAADALKCAACGCHRSFHRKD) form a ZF-HD dimerization-type; degenerate zinc finger. Over residues 106–125 (PSPPTPRVPLLMPPPQPQPH) the composition is skewed to pro residues. 2 disordered regions span residues 106–182 (PSPP…TKFT) and 228–257 (NNKSSIGSSSGGGSRRQPQEQQSQQQQQQQ). A compositionally biased stretch (low complexity) spans 141-155 (YHHTPSGSGGTTTES). The segment at residues 174-237 (RKRFRTKFTP…NNKSSIGSSS (64 aa)) is a DNA-binding region (homeobox). Positions 242–257 (RRQPQEQQSQQQQQQQ) are enriched in low complexity.

As to quaternary structure, homo- and heterodimer with other ZFHD proteins.

The protein resides in the nucleus. In terms of biological role, putative transcription factor. The chain is Zinc-finger homeodomain protein 6 (ZHD6) from Oryza sativa subsp. indica (Rice).